A 180-amino-acid polypeptide reads, in one-letter code: Protein GrpE (180 aa).

Belongs to the GrpE family. In terms of assembly, homodimer.

Its subcellular location is the cytoplasm. Its function is as follows. Participates actively in the response to hyperosmotic and heat shock by preventing the aggregation of stress-denatured proteins, in association with DnaK and GrpE. It is the nucleotide exchange factor for DnaK and may function as a thermosensor. Unfolded proteins bind initially to DnaJ; upon interaction with the DnaJ-bound protein, DnaK hydrolyzes its bound ATP, resulting in the formation of a stable complex. GrpE releases ADP from DnaK; ATP binding to DnaK triggers the release of the substrate protein, thus completing the reaction cycle. Several rounds of ATP-dependent interactions between DnaJ, DnaK and GrpE are required for fully efficient folding. In Picrophilus torridus (strain ATCC 700027 / DSM 9790 / JCM 10055 / NBRC 100828 / KAW 2/3), this protein is Protein GrpE.